Here is a 160-residue protein sequence, read N- to C-terminus: Putative 4-hydroxy-4-methyl-2-oxoglutarate aldolase (160 aa).

Substrate is bound by residues 75–78 (GDQL) and R97. D98 contacts a divalent metal cation.

Belongs to the class II aldolase/RraA-like family. In terms of assembly, homotrimer. A divalent metal cation is required as a cofactor.

The catalysed reaction is 4-hydroxy-4-methyl-2-oxoglutarate = 2 pyruvate. The enzyme catalyses oxaloacetate + H(+) = pyruvate + CO2. In terms of biological role, catalyzes the aldol cleavage of 4-hydroxy-4-methyl-2-oxoglutarate (HMG) into 2 molecules of pyruvate. Also contains a secondary oxaloacetate (OAA) decarboxylase activity due to the common pyruvate enolate transition state formed following C-C bond cleavage in the retro-aldol and decarboxylation reactions. In Vibrio parahaemolyticus serotype O3:K6 (strain RIMD 2210633), this protein is Putative 4-hydroxy-4-methyl-2-oxoglutarate aldolase.